The sequence spans 30 residues: Brevinin-2PTa (30 aa).

Residues Cys24 and Cys30 are joined by a disulfide bond.

In terms of tissue distribution, expressed by the skin glands.

It is found in the secreted. Functionally, has antibacterial activity against the Gram-positive bacterium S.aureus ATCC 25923 (MIC=18 uM) and the Gram-negative bacterium E.coli ATCC 25726 (MIC=18 uM). This is Brevinin-2PTa from Pulchrana picturata (Malaysian fire frog).